Reading from the N-terminus, the 874-residue chain is Alanine--tRNA ligase (874 aa).

Zn(2+) contacts are provided by His562, His566, Cys664, and His668.

This sequence belongs to the class-II aminoacyl-tRNA synthetase family. Zn(2+) is required as a cofactor.

The protein localises to the cytoplasm. It catalyses the reaction tRNA(Ala) + L-alanine + ATP = L-alanyl-tRNA(Ala) + AMP + diphosphate. Catalyzes the attachment of alanine to tRNA(Ala) in a two-step reaction: alanine is first activated by ATP to form Ala-AMP and then transferred to the acceptor end of tRNA(Ala). Also edits incorrectly charged Ser-tRNA(Ala) and Gly-tRNA(Ala) via its editing domain. This chain is Alanine--tRNA ligase, found in Neisseria meningitidis serogroup C / serotype 2a (strain ATCC 700532 / DSM 15464 / FAM18).